Consider the following 602-residue polypeptide: Potassium voltage-gated channel subfamily A member 5 (602 aa).

The interval 1-107 (MEISLVPMEN…EDQAPQDSGS (107 aa)) is disordered. Residues 1 to 202 (MEISLVPMEN…FYQLGDEAME (202 aa)) form a tetramerization domain region. At 1 to 238 (MEISLVPMEN…LIFEYPESSG (238 aa)) the chain is on the cytoplasmic side. Residues 66 to 78 (PLPPMPQELPQPR) show a composition bias toward pro residues. Phosphoserine; by CK2 and PKA is present on Ser-81. Lys-212 participates in a covalent cross-link: Glycyl lysine isopeptide (Lys-Gly) (interchain with G-Cter in SUMO). A helical transmembrane segment spans residues 239–260 (SARAIAIVSVLVILISIITFCL). At 261–314 (ETLPEFRDERELLRHPPVPPQPPAPAPGANGSGSGVLSSGPTVAPLLPRTLADP) the chain is on the extracellular side. The interval 274–297 (RHPPVPPQPPAPAPGANGSGSGVL) is disordered. Positions 276–286 (PPVPPQPPAPA) are enriched in pro residues. An N-linked (GlcNAc...) asparagine glycan is attached at Asn-290. A helical membrane pass occupies residues 315-336 (FFIVETTCVIWFTFELLVRFFA). Cys-337 is lipidated: S-palmitoyl cysteine. Residues 337–347 (CPSKAEFSRNI) are Cytoplasmic-facing. Residues 348–368 (MNIIDIVAIFPYFITLGTELA) form a helical membrane-spanning segment. The Extracellular segment spans residues 369-384 (EQQPGGGGQNGQQAMS). A helical; Voltage-sensor transmembrane segment spans residues 385–405 (LAILRVIRLVRVFRIFKLSRH). Residues 406–420 (SKGLQILGKTLQASM) are Cytoplasmic-facing. The S4-S5 linker stretch occupies residues 407–420 (KGLQILGKTLQASM). A helical transmembrane segment spans residues 421 to 442 (RELGLLIFFLFIGVILFSSAVY). The Extracellular segment spans residues 443-456 (FAEADNQGSHFSSI). An intramembrane region (helical) is located at residues 457–468 (PDAFWWAVVTMT). A Selectivity filter motif is present at residues 469-474 (TVGYGD). An intramembrane segment occupies 469–476 (TVGYGDMR). Residues 477-483 (PITVGGK) are Extracellular-facing. A helical transmembrane segment spans residues 484-512 (IVGSLCAIAGVLTIALPVPVIVSNFNYFY). Over 513–602 (HRETDHEEQA…CLDTSRETDL (90 aa)) the chain is Cytoplasmic. Lys-525 participates in a covalent cross-link: Glycyl lysine isopeptide (Lys-Gly) (interchain with G-Cter in SUMO). Ser-535, Ser-546, and Ser-569 each carry phosphoserine; by PKA. A PDZ-binding motif is present at residues 600–602 (TDL).

The protein belongs to the potassium channel family. A (Shaker) (TC 1.A.1.2) subfamily. Kv1.5/KCNA5 sub-subfamily. Homotetramer and heterotetramer of potassium channel proteins. Interacts with DLG1, which enhances channel currents. Forms a ternary complex with DLG1 and CAV3. Interacts with KCNAB1. Interacts with UBE2I. Interacts with XIRP2; the interaction is required for normal action potential configuration in the heart. Post-translationally, glycosylated. In terms of processing, sumoylated on Lys-212, and Lys-525, preferentially with SUMO3. Sumoylation regulates the voltage sensitivity of the channel. In terms of tissue distribution, expressed in the heart (at protein level). Expressed in the brain and weakly expressed in the thymus, skeletal muscle and spleen.

It localises to the cell membrane. The enzyme catalyses K(+)(in) = K(+)(out). Voltage-gated potassium channel that mediates transmembrane potassium transport in excitable membranes. Forms tetrameric potassium-selective channels through which potassium ions pass in accordance with their electrochemical gradient. The channel alternates between opened and closed conformations in response to the voltage difference across the membrane. Can form functional homotetrameric channels and heterotetrameric channels that contain variable proportions of KCNA1, KCNA2, KCNA4, KCNA5, and possibly other family members as well; channel properties depend on the type of alpha subunits that are part of the channel. Channel properties are modulated by cytoplasmic beta subunits that regulate the subcellular location of the alpha subunits and promote rapid inactivation. Homotetrameric channels display rapid activation and slow inactivation. Required for normal electrical conduction including formation of the infranodal ventricular conduction system and normal action potential configuration, as a result of its interaction with XIRP2. May play a role in regulating the secretion of insulin in normal pancreatic islets. Its function is as follows. Voltage-gated potassium channel that mediates transmembrane potassium transport in excitable membranes. Forms tetrameric potassium-selective channels through which potassium ions pass in accordance with their electrochemical gradient. The channel alternates between opened and closed conformations in response to the voltage difference across the membrane. Functionally, inactive. Inhibits expression of isoform 1 and isoform 2. The sequence is that of Potassium voltage-gated channel subfamily A member 5 (Kcna5) from Mus musculus (Mouse).